A 259-amino-acid polypeptide reads, in one-letter code: DNA terminal protein (259 aa).

At tyrosine 190 the chain carries O-(5'-phospho-DNA)-tyrosine. Positions 243–259 (KKKYKRRQKRGYGSKGV) match the Nuclear localization signal motif.

It belongs to the tectivirus DNA terminal protein family. As to quaternary structure, heterodimer with viral polymerase. Binds to ssDNA.

It localises to the virion. The protein localises to the host nucleus. Functionally, acts as a primer for viral genomic replication. DNA terminal protein is covalently linked to the 5'-ends of both strands of the genome through a phosphodiester bond between the beta-hydroxyl group of a tyrosine residue and the 5'-phosphate of the terminal deoxyadenylate. This protein is essential for DNA replication and is involved in the priming of DNA elongation. The chain is DNA terminal protein (VIII) from Enterobacteria phage PRD1 (Bacteriophage PRD1).